The following is a 151-amino-acid chain: Ribosome maturation factor RimP (151 aa).

Belongs to the RimP family.

Its subcellular location is the cytoplasm. Its function is as follows. Required for maturation of 30S ribosomal subunits. The protein is Ribosome maturation factor RimP of Thermoanaerobacter sp. (strain X514).